The following is a 488-amino-acid chain: UDP-GalNAc:beta-1,3-N-acetylgalactosaminyltransferase 2 (488 aa).

Residues 1–2 (MR) are Cytoplasmic-facing. The helical; Signal-anchor for type II membrane protein transmembrane segment at 3–23 (HLLLLFLCPCAIGVAFHLWLF) threads the bilayer. N24, N105, and N162 each carry an N-linked (GlcNAc...) asparagine glycan. At 24 to 488 (NFSGLFTWFP…CGNPCACEDR (465 aa)) the chain is on the lumenal side.

Belongs to the glycosyltransferase 31 family.

Its subcellular location is the golgi apparatus membrane. It localises to the endoplasmic reticulum. It catalyses the reaction 3-O-(N-acetyl-beta-D-glucosaminyl-(1-&gt;4)-alpha-D-mannosyl)-L-threonyl-[protein] + UDP-N-acetyl-alpha-D-galactosamine = 3-O-[beta-D-GalNAc-(1-&gt;3)-beta-D-GlcNAc-(1-&gt;4)-alpha-D-Man]-L-Thr-[protein] + UDP + H(+). It participates in protein modification; protein glycosylation. Beta-1,3-N-acetylgalactosaminyltransferase that synthesizes a unique carbohydrate structure, GalNAc-beta-1-3GlcNAc, on N- and O-glycans. Has no galactose nor galactosaminyl transferase activity toward any acceptor substrate. Involved in alpha-dystroglycan (dag1) glycosylation. The sequence is that of UDP-GalNAc:beta-1,3-N-acetylgalactosaminyltransferase 2 (b3galnt2) from Xenopus tropicalis (Western clawed frog).